The chain runs to 161 residues: Cyclic pyranopterin monophosphate synthase (161 aa).

Substrate-binding positions include 75–77 (LCH) and 113–114 (ME). D128 is an active-site residue.

Belongs to the MoaC family. In terms of assembly, homohexamer; trimer of dimers.

It catalyses the reaction (8S)-3',8-cyclo-7,8-dihydroguanosine 5'-triphosphate = cyclic pyranopterin phosphate + diphosphate. Its pathway is cofactor biosynthesis; molybdopterin biosynthesis. Catalyzes the conversion of (8S)-3',8-cyclo-7,8-dihydroguanosine 5'-triphosphate to cyclic pyranopterin monophosphate (cPMP). This chain is Cyclic pyranopterin monophosphate synthase, found in Methylobacillus flagellatus (strain ATCC 51484 / DSM 6875 / VKM B-1610 / KT).